Consider the following 160-residue polypeptide: SsrA-binding protein (160 aa).

The protein belongs to the SmpB family.

The protein resides in the cytoplasm. In terms of biological role, required for rescue of stalled ribosomes mediated by trans-translation. Binds to transfer-messenger RNA (tmRNA), required for stable association of tmRNA with ribosomes. tmRNA and SmpB together mimic tRNA shape, replacing the anticodon stem-loop with SmpB. tmRNA is encoded by the ssrA gene; the 2 termini fold to resemble tRNA(Ala) and it encodes a 'tag peptide', a short internal open reading frame. During trans-translation Ala-aminoacylated tmRNA acts like a tRNA, entering the A-site of stalled ribosomes, displacing the stalled mRNA. The ribosome then switches to translate the ORF on the tmRNA; the nascent peptide is terminated with the 'tag peptide' encoded by the tmRNA and targeted for degradation. The ribosome is freed to recommence translation, which seems to be the essential function of trans-translation. This Escherichia coli O6:K15:H31 (strain 536 / UPEC) protein is SsrA-binding protein.